Reading from the N-terminus, the 582-residue chain is Colicin-E9 (582 aa).

Disordered stretches follow at residues 1 to 74 (MSGG…SGGG), 246 to 270 (SPGVTNNTDKDVRPAGFTQGGNTRD), 294 to 321 (PDQVKQRQDEENRRQQEWDATHPVEAAE), 422 to 489 (ADAA…IADK), and 510 to 542 (SKDPELSKNLNPSNKSSVSKGYSPFTPKNQQVG). The span at 20 to 35 (INGGPTGIGVSGGASD) shows a compositional bias: gly residues. Residues 36-45 (GSGWSSENNP) show a composition bias toward low complexity. The segment covering 46–74 (WGGGSGSGIHWGGGSGRGNGGGNGNSGGG) has biased composition (gly residues). 3 stretches are compositionally biased toward basic and acidic residues: residues 297–321 (VKQRQDEENRRQQEWDATHPVEAAE), 430–453 (QERRKQKENKEKDAKDKLDKESKR), and 465–476 (PVGDKWLDDAGK). A compositionally biased stretch (low complexity) spans 516–529 (SKNLNPSNKSSVSK). Residues His-550, His-575, and His-579 each contribute to the Zn(2+) site.

It belongs to the colicin/pyosin nuclease family.

This plasmid-coded bactericidal protein is an endonuclease active on both single- and double-stranded DNA but with undefined specificity. Functionally, colicins are polypeptide toxins produced by and active against E.coli and closely related bacteria. The polypeptide is Colicin-E9 (col) (Escherichia coli).